Reading from the N-terminus, the 346-residue chain is Phosphate acyltransferase (346 aa).

Belongs to the PlsX family. Homodimer. Probably interacts with PlsY.

It is found in the cytoplasm. The enzyme catalyses a fatty acyl-[ACP] + phosphate = an acyl phosphate + holo-[ACP]. The protein operates within lipid metabolism; phospholipid metabolism. Catalyzes the reversible formation of acyl-phosphate (acyl-PO(4)) from acyl-[acyl-carrier-protein] (acyl-ACP). This enzyme utilizes acyl-ACP as fatty acyl donor, but not acyl-CoA. In Delftia acidovorans (strain DSM 14801 / SPH-1), this protein is Phosphate acyltransferase.